Here is a 40-residue protein sequence, read N- to C-terminus: Ostricacin-3 (40 aa).

3 cysteine pairs are disulfide-bonded: cysteine 8–cysteine 36, cysteine 15–cysteine 30, and cysteine 20–cysteine 37.

Its subcellular location is the secreted. Functionally, has antibacterial activity against the Gram-positive bacterium S.aureus 1056 MRSA (MIC=2.78 ug/ml) and the Gram-negative bacterium E.coli O157:H7 (MIC=2.41 ug/ml). Does not have antifungal activity against the yeast C.albicans 3153A. In Struthio camelus (Common ostrich), this protein is Ostricacin-3.